We begin with the raw amino-acid sequence, 97 residues long: MLTKSRLQVFHELHCLNFLRKLIYPDVYGKIDYKGQIHANHCIDHIRRIAECGSNATPVVYTGYKNGNLYSEPETYTCRNFTLIRQWAEMKKIQNTQ.

2 consecutive short sequence motifs (HXXHC) follow at residues 11–15 (HELHC) and 38–42 (HANHC).

The protein belongs to the ustYa family.

Its pathway is mycotoxin biosynthesis. Functionally, ustYa family oxidase, part of the gene cluster that mediates the biosynthesis of the secondary metabolite victorin, the molecular basis for Victoria blight of oats. The role of vicYc within the pathway has still to be determined. The pathway starts with the processing of the precursor vicA1 by several endopeptidases including kexin proteases as well as the cluster-specific S28 family peptidases vicPa and vicPb to produce 7 identical copies of the hexapeptide Gly-Leu-Lys-Leu-Ala-Phe. After being excised from the precursor peptide, the core peptides are cyclized and modified post-translationally by enzymes encoded within the gene cluster. The ustYa family oxidase vicYb is required for the formation of the macrocycle in victorin and the copper amine oxidases (CAOs) vicK1 and vicK2 are responsible for converting victorin to the active form by oxidizing the N-terminal glycyl residue in the peptides to glyoxylate. Relaxed substrate specificity of enzymes in the victorin biosynthetic pathway results in a metabolic grid that produces a set of analogs including victorinines B, C, E or HV-toxin M. This Bipolaris victoriae (strain FI3) (Victoria blight of oats agent) protein is UstYa family oxidase VicYc.